The sequence spans 295 residues: MIEVLTTTDSQKLLHQLNALLEQESRCQPKVCGLRLIESAHDNGLRMTARLRDFEVKDLLSLTQFFGFDTETFSLAVNLLDRFLSKMKVQPKHLGCVGLSCFYLAVKSIEEERNVPLATDLIRISQYRFTVSDLMRMEKIVLEKVCWKVKATTAFQFLQLYYSLLQENLPLERRNSINFERLEAQLKACHCRIIFSKAKPSVLALSIIALEIQAQKCVELTEGIECLQKHSKINGRDLTFWQELVSKCLTEYSSNKCSKPNVQKLKWIVSGRTARQLKHSYYRITHLPTIPEMVP.

It belongs to the cyclin family. Cyclin G subfamily. In terms of tissue distribution, high levels in skeletal muscle, ovary, kidney and colon.

The protein localises to the nucleus. May play a role in growth regulation. Is associated with G2/M phase arrest in response to DNA damage. May be an intermediate by which p53 mediates its role as an inhibitor of cellular proliferation. The protein is Cyclin-G1 (CCNG1) of Homo sapiens (Human).